A 117-amino-acid polypeptide reads, in one-letter code: Large ribosomal subunit protein uL18 (117 aa).

Belongs to the universal ribosomal protein uL18 family. In terms of assembly, part of the 50S ribosomal subunit; part of the 5S rRNA/L5/L18/L25 subcomplex. Contacts the 5S and 23S rRNAs.

Its function is as follows. This is one of the proteins that bind and probably mediate the attachment of the 5S RNA into the large ribosomal subunit, where it forms part of the central protuberance. This is Large ribosomal subunit protein uL18 from Acidithiobacillus ferrooxidans (strain ATCC 23270 / DSM 14882 / CIP 104768 / NCIMB 8455) (Ferrobacillus ferrooxidans (strain ATCC 23270)).